A 248-amino-acid polypeptide reads, in one-letter code: 2,3-bisphosphoglycerate-dependent phosphoglycerate mutase (248 aa).

Substrate is bound by residues 8 to 15 (RHGESTWN), 21 to 22 (TG), R60, 87 to 90 (ERHY), K98, 114 to 115 (RR), and 183 to 184 (GN). Catalysis depends on H9, which acts as the Tele-phosphohistidine intermediate. Residue E87 is the Proton donor/acceptor of the active site.

The protein belongs to the phosphoglycerate mutase family. BPG-dependent PGAM subfamily. Homodimer.

It catalyses the reaction (2R)-2-phosphoglycerate = (2R)-3-phosphoglycerate. The protein operates within carbohydrate degradation; glycolysis; pyruvate from D-glyceraldehyde 3-phosphate: step 3/5. Catalyzes the interconversion of 2-phosphoglycerate and 3-phosphoglycerate. The polypeptide is 2,3-bisphosphoglycerate-dependent phosphoglycerate mutase (Burkholderia lata (strain ATCC 17760 / DSM 23089 / LMG 22485 / NCIMB 9086 / R18194 / 383)).